A 241-amino-acid chain; its full sequence is Parkin coregulated gene protein homolog (241 aa).

As to quaternary structure, microtubule inner protein component of sperm flagellar doublet microtubules. Forms a large molecular chaperone complex containing heat shock proteins 70 and 90 and chaperonin components. Interacts with STIP1, PRKN, GPR37, HSPA8, TCP1/CCT1, CCT2, CCT3, CCT4, CCT5, CCT6A, CCT7 and CCT8. Interacts with MEIG1.

It is found in the cytoplasm. It localises to the cytoskeleton. The protein resides in the cilium axoneme. Its subcellular location is the flagellum axoneme. Microtubule inner protein (MIP) part of the dynein-decorated doublet microtubules (DMTs) in cilia axoneme, which is required for motile cilia beating. Suppresses cell death induced by accumulation of unfolded Pael receptor (Pael-R, a substrate of Parkin). Facilitates the formation of inclusions consisting of Pael-R, molecular chaperones, protein degradation molecules and itself when proteasome is inhibited. May play an important role in the formation of Lewy bodies and protection of dopaminergic neurons against Parkinson disease. The chain is Parkin coregulated gene protein homolog (Pacrg) from Mus musculus (Mouse).